A 66-amino-acid polypeptide reads, in one-letter code: U1-theraphotoxin-Cg1d 1 (66 aa).

An N-terminal signal peptide occupies residues 1-21 (MKMSALFVIFGLALLFCNSFA). A propeptide spanning residues 22–29 (AELKATGR) is cleaved from the precursor. 3 cysteine pairs are disulfide-bonded: cysteine 31/cysteine 46, cysteine 38/cysteine 51, and cysteine 45/cysteine 58. Proline 63 carries the proline amide modification.

This sequence belongs to the neurotoxin 10 (Hwtx-1) family. 46 (Jztx-7/10/12) subfamily. In terms of tissue distribution, expressed by the venom gland.

Its subcellular location is the secreted. In terms of biological role, probable ion channel inhibitor. The sequence is that of U1-theraphotoxin-Cg1d 1 from Chilobrachys guangxiensis (Chinese earth tiger tarantula).